A 335-amino-acid chain; its full sequence is MEERNKTLGEFIIENQQSFQYSSGELSRIINSIRLAAKVVNYKVNKAGLVDIVGAAGEQNIQGEDQQKLDVYANEIFIQTLINREIVCGIASEENDDFITVAGSDNSHNNKYVVLMDPLDGSSNIDVNVSVGTIFSVFRRITPVGTPVTIEDFLQPGINQVAAGYVIYGTSTMLVYTTGDGVNGFTLNPAIGTFYLSHPNMKYSKDGHIYSMNEGNYVHFPQGVKNYIKYCQSEEGDRPYTSRYIGSLVSDFHRNMIKGGIYIYPTSSKAPKGKLRLLYECSPMAFIAEQAGGKASDGYNRIMEIQPTELHQRVPFFCGSYNMVEKAEEFMKNTK.

Positions 93, 117, 119, and 120 each coordinate Mg(2+). Residues 120 to 123, Asn213, Tyr244, and Lys274 contribute to the substrate site; that span reads DGSS. Glu280 is a binding site for Mg(2+).

Belongs to the FBPase class 1 family. Homotetramer. The cofactor is Mg(2+).

It is found in the cytoplasm. The catalysed reaction is beta-D-fructose 1,6-bisphosphate + H2O = beta-D-fructose 6-phosphate + phosphate. It functions in the pathway carbohydrate biosynthesis; gluconeogenesis. This Flavobacterium psychrophilum (strain ATCC 49511 / DSM 21280 / CIP 103535 / JIP02/86) protein is Fructose-1,6-bisphosphatase class 1.